The sequence spans 313 residues: Putative S-adenosyl-L-methionine-dependent methyltransferase MMAR_0955 (313 aa).

S-adenosyl-L-methionine-binding positions include aspartate 132 and 161-162; that span reads DL.

The protein belongs to the UPF0677 family.

Functionally, exhibits S-adenosyl-L-methionine-dependent methyltransferase activity. The chain is Putative S-adenosyl-L-methionine-dependent methyltransferase MMAR_0955 from Mycobacterium marinum (strain ATCC BAA-535 / M).